The following is a 297-amino-acid chain: Acetaldehyde dehydrogenase (297 aa).

NAD(+) is bound at residue 15–18 (SGSI). Catalysis depends on Cys130, which acts as the Acyl-thioester intermediate. Residues 162 to 170 (SAGIATREN) and Asn272 each bind NAD(+).

It belongs to the acetaldehyde dehydrogenase family.

It carries out the reaction acetaldehyde + NAD(+) + CoA = acetyl-CoA + NADH + H(+). This chain is Acetaldehyde dehydrogenase (mhpF), found in Burkholderia pseudomallei (strain K96243).